The primary structure comprises 655 residues: Acetyl-coenzyme A synthetase (655 aa).

CoA is bound by residues 193–196 (RGNK) and T313. ATP is bound by residues 389–391 (GEP), 413–418 (DTWWQT), D502, and R517. S525 contributes to the CoA binding site. R528 lines the ATP pocket. The Mg(2+) site is built by V539 and H541. R586 contributes to the CoA binding site. Position 611 is an N6-acetyllysine (K611).

This sequence belongs to the ATP-dependent AMP-binding enzyme family. Mg(2+) serves as cofactor. Post-translationally, acetylated. Deacetylation by the SIR2-homolog deacetylase activates the enzyme.

It catalyses the reaction acetate + ATP + CoA = acetyl-CoA + AMP + diphosphate. Functionally, catalyzes the conversion of acetate into acetyl-CoA (AcCoA), an essential intermediate at the junction of anabolic and catabolic pathways. AcsA undergoes a two-step reaction. In the first half reaction, AcsA combines acetate with ATP to form acetyl-adenylate (AcAMP) intermediate. In the second half reaction, it can then transfer the acetyl group from AcAMP to the sulfhydryl group of CoA, forming the product AcCoA. The sequence is that of Acetyl-coenzyme A synthetase from Psychrobacter cryohalolentis (strain ATCC BAA-1226 / DSM 17306 / VKM B-2378 / K5).